Here is a 330-residue protein sequence, read N- to C-terminus: Ketol-acid reductoisomerase (NADP(+)) (330 aa).

In terms of domain architecture, KARI N-terminal Rossmann spans methionine 1–threonine 181. NADP(+) is bound by residues tyrosine 24–glutamine 27, arginine 47, serine 50, serine 52, and aspartate 82–glutamine 85. Histidine 107 is a catalytic residue. Glycine 133 serves as a coordination point for NADP(+). Residues threonine 182 to leucine 327 enclose the KARI C-terminal knotted domain. Positions 190, 194, 226, and 230 each coordinate Mg(2+). Serine 251 is a substrate binding site.

It belongs to the ketol-acid reductoisomerase family. Mg(2+) is required as a cofactor.

It carries out the reaction (2R)-2,3-dihydroxy-3-methylbutanoate + NADP(+) = (2S)-2-acetolactate + NADPH + H(+). The catalysed reaction is (2R,3R)-2,3-dihydroxy-3-methylpentanoate + NADP(+) = (S)-2-ethyl-2-hydroxy-3-oxobutanoate + NADPH + H(+). It functions in the pathway amino-acid biosynthesis; L-isoleucine biosynthesis; L-isoleucine from 2-oxobutanoate: step 2/4. The protein operates within amino-acid biosynthesis; L-valine biosynthesis; L-valine from pyruvate: step 2/4. Its function is as follows. Involved in the biosynthesis of branched-chain amino acids (BCAA). Catalyzes an alkyl-migration followed by a ketol-acid reduction of (S)-2-acetolactate (S2AL) to yield (R)-2,3-dihydroxy-isovalerate. In the isomerase reaction, S2AL is rearranged via a Mg-dependent methyl migration to produce 3-hydroxy-3-methyl-2-ketobutyrate (HMKB). In the reductase reaction, this 2-ketoacid undergoes a metal-dependent reduction by NADPH to yield (R)-2,3-dihydroxy-isovalerate. The chain is Ketol-acid reductoisomerase (NADP(+)) from Chlorobium phaeovibrioides (strain DSM 265 / 1930) (Prosthecochloris vibrioformis (strain DSM 265)).